Here is a 464-residue protein sequence, read N- to C-terminus: Tryprostatin B synthase (464 aa).

Residues Met94 and Glu102 each contribute to the brevianamide F site. 3 residues coordinate dimethylallyl diphosphate: Arg113, Lys201, and Tyr203. Tyr205 is a binding site for brevianamide F. Dimethylallyl diphosphate is bound by residues Lys294, Tyr296, Gln380, Tyr382, Tyr446, and Tyr450.

It belongs to the tryptophan dimethylallyltransferase family.

It catalyses the reaction brevianamide F + dimethylallyl diphosphate = tryprostatin B + diphosphate. The protein operates within mycotoxin biosynthesis. Functionally, brevianamide F prenyltransferase; part of the gene cluster that mediates the biosynthesis of fumitremorgins, indole alkaloids that carry not only intriguing chemical structures, but also interesting biological and pharmacological activities. The biosynthesis of fumitremorgin-type alkaloids begins by condensation of the two amino acids L-tryptophan and L-proline to brevianamide F, catalyzed by the non-ribosomal peptide synthetase ftmA. Brevianamide F is then prenylated by the prenyltransferase ftmPT1/ftmB in the presence of dimethylallyl diphosphate, resulting in the formation of tryprostatin B. The three cytochrome P450 monooxygenases, ftmP450-1/ftmC, ftmP450-2/ftmE and ftmP450-3/FtmG, are responsible for the conversion of tryprostatin B to 6-hydroxytryprostatin B, tryprostatin A to fumitremorgin C and fumitremorgin C to 12,13-dihydroxyfumitremorgin C, respectively. The putative methyltransferase ftmMT/ftmD is expected for the conversion of 6-hydroxytryprostatin B to tryprostatin A. FtmPT2/FtmH catalyzes the prenylation of 12,13-dihydroxyfumitre-morgin C in the presence of dimethylallyl diphosphate, resulting in the formation of fumitremorgin B. Fumitremorgin B is further converted to verruculogen by ftmOx1/ftmF via the insertion of an endoperoxide bond between the two prenyl moieties. In some fungal species, verruculogen is further converted to fumitremorgin A, but the enzymes involved in this step have not been identified yet. The polypeptide is Tryprostatin B synthase (Aspergillus fumigatus (Neosartorya fumigata)).